We begin with the raw amino-acid sequence, 160 residues long: Transcription elongation factor GreA (160 aa).

The stretch at 3–84 (SIVNDKILLT…SKAKIIKADL (82 aa)) forms a coiled coil.

It belongs to the GreA/GreB family.

Necessary for efficient RNA polymerase transcription elongation past template-encoded arresting sites. The arresting sites in DNA have the property of trapping a certain fraction of elongating RNA polymerases that pass through, resulting in locked ternary complexes. Cleavage of the nascent transcript by cleavage factors such as GreA or GreB allows the resumption of elongation from the new 3'terminus. GreA releases sequences of 2 to 3 nucleotides. This is Transcription elongation factor GreA from Mesomycoplasma hyopneumoniae (strain 7448) (Mycoplasma hyopneumoniae).